Here is a 24-residue protein sequence, read N- to C-terminus: Antimicrobial peptide PGQ (24 aa).

This sequence belongs to the gastrin/cholecystokinin family. Magainin subfamily. In terms of tissue distribution, is synthesized in the stomach and stored in a novel granular multinucleated cell in the gastric mucosa. It is stored as active, processed peptides in large granules within the granular gland secretions of the skin.

The protein localises to the secreted. In terms of biological role, antimicrobial peptide. The protein is Antimicrobial peptide PGQ (pgq) of Xenopus laevis (African clawed frog).